The chain runs to 230 residues: CRP-like protein Clp (230 aa).

18-139 (PSLTLDAGTI…APRILYAIGV (122 aa)) is a binding site for a nucleoside 3',5'-cyclic phosphate. Positions 158–230 (LDVTDRIVRT…GKTVVLYGTR (73 aa)) constitute an HTH crp-type domain. A DNA-binding region (H-T-H motif) is located at residues 190 to 209 (RQELARLVGCSREMAGRVLK).

Homodimer.

Its subcellular location is the cytoplasm. Allosterically inhibited by cyclic di-GMP (c-di-GMP), which binds to Clp and abolishes its ability to bind its target gene promoter. In terms of biological role, global transcriptional regulator that regulates virulence factors production by activating or repressing the expression of a large set of genes in diffusible signal factor (DSF) pathway. This chain is CRP-like protein Clp (clp), found in Xanthomonas campestris pv. campestris (strain 8004).